We begin with the raw amino-acid sequence, 243 residues long: DNA repair protein RecO (243 aa).

This sequence belongs to the RecO family.

Its function is as follows. Involved in DNA repair and RecF pathway recombination. In Vibrio parahaemolyticus serotype O3:K6 (strain RIMD 2210633), this protein is DNA repair protein RecO.